The following is a 93-amino-acid chain: Small ribosomal subunit protein uS19c (93 aa).

This sequence belongs to the universal ribosomal protein uS19 family.

Its subcellular location is the plastid. The protein localises to the chloroplast. Functionally, protein S19 forms a complex with S13 that binds strongly to the 16S ribosomal RNA. In Ipomoea purpurea (Common morning glory), this protein is Small ribosomal subunit protein uS19c.